The chain runs to 281 residues: Short neuropeptide F (281 aa).

Residues 1–30 form the signal peptide; the sequence is MFHLKRELSQGCALALICLVSLQMQQPAQA. The propeptide occupies 31–64; it reads EVSSAQGTPLSNLYDNLLQREYAGPVVFPNHQVE. Phenylalanine amide is present on residues Phe77 and Phe111. The propeptide occupies 115 to 165; sequence DPSLPQMRRTAYDDLLERELTLNSQQQQQQLGTEPDSDLGADYDGLYERVV. The tract at residues 137–156 is disordered; the sequence is NSQQQQQQLGTEPDSDLGAD. Residue Trp173 is modified to Tryptophan amide. Residues 176–246 constitute a propeptide that is removed on maturation; that stretch reads SVPQFEANNA…NDTSEFQREV (71 aa). Positions 226 to 281 are disordered; the sequence is ANDEDTDTDLNNDTSEFQREVRKPMRLRWGRSTGKAPSEQKHTPEETSSIPPKTQN. Trp254 carries the tryptophan amide modification. The propeptide occupies 257–281; the sequence is STGKAPSEQKHTPEETSSIPPKTQN. The span at 271–281 shows a compositional bias: polar residues; the sequence is ETSSIPPKTQN.

This sequence belongs to the NPY family. As to expression, stage 17 embryos show expression in the two brain hemispheres (neural cells located in the dorsal posterior region), the connected ventral ganglion (pairs of neural cells along the ventral midline) and the peripheral nervous system (expressed in the antennal-maxillary sensory cells). In the brain hemispheres of the feeding third instar larva, expression in neural cells is located in the dorsal-anterior region of the protocerebrum. In the larval ventral ganglion, expression is seen in the neural cells located in the subesophagial region, along the ventral midline and in thoracic and abdominal segments. In the adult brain, expression is seen in the medulla and the mushroom body calyx (at protein level).

The protein localises to the secreted. Functionally, plays a role in controlling food intake and regulating body size. The polypeptide is Short neuropeptide F (sNPF) (Drosophila melanogaster (Fruit fly)).